A 286-amino-acid chain; its full sequence is Protein N-terminal amidase (286 aa).

In terms of domain architecture, CN hydrolase spans 1 to 286 (MKFGCVQFFP…NGIVVGELEK (286 aa)). The active-site Proton acceptor is the E43. K121 acts as the Proton donor in catalysis. The active-site Nucleophile is the C155.

Belongs to the carbon-nitrogen hydrolase superfamily.

Its subcellular location is the cytoplasm. The protein localises to the nucleus. Its function is as follows. Deamidates N-terminal Asn and Gln. Component of a targeting complex in the N-end rule pathway. This is Protein N-terminal amidase (nta1) from Schizosaccharomyces pombe (strain 972 / ATCC 24843) (Fission yeast).